The chain runs to 6995 residues: Fibrous sheath-interacting protein 2 (6995 aa).

Disordered regions lie at residues 273–292, 308–336, and 351–476; these read EQKIEEQRRKSREESDRKKQ, DTGLKDDIGRNGFDYRGQNGTTFESSSKK, and GDQK…TDAP. Over residues 359–396 the composition is skewed to polar residues; it reads TSGQVSATVNQSQSSSKDVTKVSASSVTYPAEVQNSSS. The segment covering 397–421 has biased composition (basic and acidic residues); sequence EQKRSEVTKRLSDERGKNSTDDSAR. Residues 424-442 show a composition bias toward polar residues; the sequence is IISTQLSPTRNAKLSQISL. The residue at position 430 (Ser430) is a Phosphoserine. The segment covering 443 to 452 has biased composition (basic and acidic residues); the sequence is DHQKEEKEMK. Over residues 453–463 the composition is skewed to polar residues; that stretch reads STWNGGLSKKS. Residues 665-692 adopt a coiled-coil conformation; it reads LEISLLYDKKAKAMDQIKNLKNVFVNFK. 9 disordered regions span residues 1452–1472, 2554–2595, 2699–2731, 3182–3270, 5489–5665, 5719–5740, 5823–5878, 5943–5996, and 6973–6995; these read PDPQPSCSHQNTETIDKDPPT, KSKR…VPQM, TKTKIKNKLSAGEKTPRESRSKTALGLPQTPQV, PVKM…PNFT, GPSA…KYKG, SKSSVKTDDRPMSKDKETMTEK, KDLS…SKSK, KEDE…PDKL, and SKVFSRSSGSIPKSSSPPHQDKR. Positions 2555-2565 are enriched in basic and acidic residues; it reads SKREGEMHDSS. Polar residues predominate over residues 3187–3204; that stretch reads PSNTSDTPRTRRSSQGSV. The span at 3220–3231 shows a compositional bias: low complexity; the sequence is SVTSNSSSHISS. Polar residues predominate over residues 3232–3250; sequence CVENTNKSLEPMGRSNSEA. The span at 3255-3265 shows a compositional bias: basic residues; that stretch reads SRHKAHDHGQR. A compositionally biased stretch (basic and acidic residues) spans 5496–5509; it reads DAKKEDESKVKPAT. Polar residues-rich tracts occupy residues 5523–5557, 5565–5625, and 5638–5650; these read MKSQGSQVQQLATSPPTSMKSQRIQVQQSVMSPPT, QVQQ…QSAM, and VQESSTSPPTTMK. Basic and acidic residues-rich tracts occupy residues 5719 to 5738 and 5829 to 5877; these read SKSSVKTDDRPMSKDKETMT and GHRD…ESKS. The span at 5982 to 5993 shows a compositional bias: polar residues; sequence SDVQKTPEQSSP. The segment covering 6977–6995 has biased composition (low complexity); it reads SRSSGSIPKSSSPPHQDKR.

As to quaternary structure, may interact with AKAP4. Predominantly expressed in testis.

Plays a role in spermatogenesis. This is Fibrous sheath-interacting protein 2 (Fsip2) from Mus musculus (Mouse).